The sequence spans 114 residues: Large ribosomal subunit protein uL22 (114 aa).

Belongs to the universal ribosomal protein uL22 family. As to quaternary structure, part of the 50S ribosomal subunit.

Functionally, this protein binds specifically to 23S rRNA; its binding is stimulated by other ribosomal proteins, e.g. L4, L17, and L20. It is important during the early stages of 50S assembly. It makes multiple contacts with different domains of the 23S rRNA in the assembled 50S subunit and ribosome. Its function is as follows. The globular domain of the protein is located near the polypeptide exit tunnel on the outside of the subunit, while an extended beta-hairpin is found that lines the wall of the exit tunnel in the center of the 70S ribosome. In Streptococcus gordonii (strain Challis / ATCC 35105 / BCRC 15272 / CH1 / DL1 / V288), this protein is Large ribosomal subunit protein uL22.